The primary structure comprises 188 residues: Elongation factor P-like protein (188 aa).

It belongs to the elongation factor P family.

The protein is Elongation factor P-like protein of Alcanivorax borkumensis (strain ATCC 700651 / DSM 11573 / NCIMB 13689 / SK2).